Reading from the N-terminus, the 262-residue chain is Deaminated glutathione amidase (262 aa).

The CN hydrolase domain occupies 1 to 238 (MLVAAGQFAV…PALIMAEVTP (238 aa)). E40 acts as the Proton acceptor in catalysis. K110 functions as the Proton donor in the catalytic mechanism. The active-site Nucleophile is the C147.

It belongs to the carbon-nitrogen hydrolase superfamily. NIT1/NIT2 family.

It carries out the reaction N-(4-oxoglutaryl)-L-cysteinylglycine + H2O = L-cysteinylglycine + 2-oxoglutarate. Its function is as follows. Hydrolyzes deaminated glutathione (dGSH) to 2-oxoglutarate and L-cysteinylglycine, and no activity on glutathione or L-glutamine. May function as a metabolite repair enzyme. This Escherichia coli O157:H7 protein is Deaminated glutathione amidase (ybeM).